The chain runs to 344 residues: Lipase chaperone (344 aa).

The chain crosses the membrane as a helical span at residues 14-34 (VAVYGAVGLAAIAGVAIWSGA). Over residues 45–57 (LSADAAARDGASA) the composition is skewed to low complexity. The tract at residues 45–78 (LSADAAARDGASAAPPPPARPASAGMPSPLAGSS) is disordered.

Belongs to the lipase chaperone family.

It is found in the cell inner membrane. May be involved in the folding of the extracellular lipase during its passage through the periplasm. The protein is Lipase chaperone of Burkholderia ambifaria (strain ATCC BAA-244 / DSM 16087 / CCUG 44356 / LMG 19182 / AMMD) (Burkholderia cepacia (strain AMMD)).